Here is a 1482-residue protein sequence, read N- to C-terminus: Pregnancy zone protein (1482 aa).

The N-terminal stretch at Met1–Ser25 is a signal peptide. 5 N-linked (GlcNAc...) asparagine glycosylation sites follow: Asn54, Asn69, Asn246, Asn392, and Asn406. The tract at residues Cys685–Glu735 is bait region. Asn753, Asn875, and Asn932 each carry an N-linked (GlcNAc...) asparagine glycan. Positions Cys978–Gln981 form a cross-link, isoglutamyl cysteine thioester (Cys-Gln). Residues Asn997 and Asn1430 are each glycosylated (N-linked (GlcNAc...) asparagine).

This sequence belongs to the protease inhibitor I39 (alpha-2-macroglobulin) family. Homotetramer, which consists of two pairs of disulfide-linked chains. Plasma. Prominent constituent of late-pregnancy sera.

The protein resides in the secreted. Its function is as follows. Is able to inhibit all four classes of proteinases by a unique 'trapping' mechanism. This protein has a peptide stretch, called the 'bait region' which contains specific cleavage sites for different proteinases. When a proteinase cleaves the bait region, a conformational change is induced in the protein which traps the proteinase. The entrapped enzyme remains active against low molecular weight substrates (activity against high molecular weight substrates is greatly reduced). Following cleavage in the bait region a thioester bond is hydrolyzed and mediates the covalent binding of the protein to the proteinase. This is Pregnancy zone protein (PZP) from Homo sapiens (Human).